Here is a 409-residue protein sequence, read N- to C-terminus: Dual-specificity RNA methyltransferase RlmN (409 aa).

Glu121 serves as the catalytic Proton acceptor. Positions 127-376 (EEGRGTLCIS…IRTPRGRDIL (250 aa)) constitute a Radical SAM core domain. Cys134 and Cys379 form a disulfide bridge. 3 residues coordinate [4Fe-4S] cluster: Cys141, Cys145, and Cys148. Residues 205-206 (GE), Ser237, 259-261 (SLH), and Asn336 each bind S-adenosyl-L-methionine. The S-methylcysteine intermediate role is filled by Cys379.

The protein belongs to the radical SAM superfamily. RlmN family. [4Fe-4S] cluster is required as a cofactor.

It localises to the cytoplasm. The enzyme catalyses adenosine(2503) in 23S rRNA + 2 reduced [2Fe-2S]-[ferredoxin] + 2 S-adenosyl-L-methionine = 2-methyladenosine(2503) in 23S rRNA + 5'-deoxyadenosine + L-methionine + 2 oxidized [2Fe-2S]-[ferredoxin] + S-adenosyl-L-homocysteine. It carries out the reaction adenosine(37) in tRNA + 2 reduced [2Fe-2S]-[ferredoxin] + 2 S-adenosyl-L-methionine = 2-methyladenosine(37) in tRNA + 5'-deoxyadenosine + L-methionine + 2 oxidized [2Fe-2S]-[ferredoxin] + S-adenosyl-L-homocysteine. In terms of biological role, specifically methylates position 2 of adenine 2503 in 23S rRNA and position 2 of adenine 37 in tRNAs. m2A2503 modification seems to play a crucial role in the proofreading step occurring at the peptidyl transferase center and thus would serve to optimize ribosomal fidelity. This chain is Dual-specificity RNA methyltransferase RlmN, found in Agrobacterium fabrum (strain C58 / ATCC 33970) (Agrobacterium tumefaciens (strain C58)).